A 268-amino-acid chain; its full sequence is Ubiquinone/menaquinone biosynthesis C-methyltransferase UbiE (268 aa).

A disordered region spans residues 1–23 (MTDQHAFATEQVQLDPTLSPTTE). The span at 10–23 (EQVQLDPTLSPTTE) shows a compositional bias: polar residues. Residues threonine 91, aspartate 112, 140 to 141 (NA), and serine 157 contribute to the S-adenosyl-L-methionine site.

This sequence belongs to the class I-like SAM-binding methyltransferase superfamily. MenG/UbiE family.

It carries out the reaction a 2-demethylmenaquinol + S-adenosyl-L-methionine = a menaquinol + S-adenosyl-L-homocysteine + H(+). The enzyme catalyses a 2-methoxy-6-(all-trans-polyprenyl)benzene-1,4-diol + S-adenosyl-L-methionine = a 5-methoxy-2-methyl-3-(all-trans-polyprenyl)benzene-1,4-diol + S-adenosyl-L-homocysteine + H(+). It functions in the pathway quinol/quinone metabolism; menaquinone biosynthesis; menaquinol from 1,4-dihydroxy-2-naphthoate: step 2/2. It participates in cofactor biosynthesis; ubiquinone biosynthesis. Its function is as follows. Methyltransferase required for the conversion of demethylmenaquinol (DMKH2) to menaquinol (MKH2) and the conversion of 2-polyprenyl-6-methoxy-1,4-benzoquinol (DDMQH2) to 2-polyprenyl-3-methyl-6-methoxy-1,4-benzoquinol (DMQH2). The protein is Ubiquinone/menaquinone biosynthesis C-methyltransferase UbiE of Pasteurella multocida (strain Pm70).